A 198-amino-acid polypeptide reads, in one-letter code: Angiopoietin-like protein 8 (198 aa).

The N-terminal stretch at 1–15 (MAVLALCLLWTLASA) is a signal peptide.

The protein belongs to the ANGPTL8 family. Interacts with ANGPTL3. Post-translationally, proteolytically cleaved at the N-terminus. In terms of tissue distribution, expressed in liver and fat. Enriched in white and brown adipose tissues.

Its subcellular location is the secreted. Its function is as follows. Hormone that acts as a blood lipid regulator by regulating serum triglyceride levels. May be involved in the metabolic transition between fasting and refeeding: required to direct fatty acids to adipose tissue for storage in the fed state. According to a report, may act by promoting ANGPTL3 cleavage. According to another study, not required for cleavage of ANGPTL3. The protein is Angiopoietin-like protein 8 of Mus musculus (Mouse).